Reading from the N-terminus, the 557-residue chain is E3 ubiquitin-protein ligase ARIH1 (557 aa).

The segment covering 1-47 (MDSDEGYNYEFDEDEECSEEDSGAEEEEDEDDDEPDDDTLDLGEVEL) has biased composition (acidic residues). Residues 1–95 (MDSDEGYNYE…GGGGGPGHEQ (95 aa)) are disordered. Over residues 65–92 (ETGGGGGSALGPGGGGGGGGGGGGGGPG) the composition is skewed to gly residues. The interval 105-153 (TAEQILQHMVECIREVNEVIQNPATITRILLSHFNWDKEKLMERYFDGN) is UBA-like. Lysine 142 bears the N6-acetyllysine mark. Residues 182 to 393 (QDMPCQICYL…SAWYNCNRYN (212 aa)) are TRIAD supradomain. Zn(2+) contacts are provided by cysteine 186, cysteine 189, cysteine 203, histidine 205, cysteine 208, cysteine 211, cysteine 231, cysteine 236, cysteine 276, cysteine 281, cysteine 297, cysteine 299, cysteine 304, cysteine 307, histidine 312, cysteine 317, cysteine 344, and cysteine 347. Residues 186–236 (CQICYLNYPNSYFTGLECGHKFCMQCWSEYLTTKIMEEGMGQTISCPAHGC) form an RING-type 1 zinc finger. The IBR-type zinc finger occupies 256–317 (LKYQHLITNS…GENWHDPVKC (62 aa)). The RING-type 2; atypical zinc finger occupies 344 to 375 (CPKCHVTIEKDGGCNHMVCRNQNCKAEFCWVC). Cysteine 357 is a catalytic residue. Residues cysteine 362, cysteine 367, cysteine 372, cysteine 375, histidine 382, and cysteine 389 each contribute to the Zn(2+) site. The tract at residues 408 to 557 (RAALQRYLFY…EKDLWEYIED (150 aa)) is ariadne domain.

This sequence belongs to the RBR family. Ariadne subfamily. As to quaternary structure, interacts (via the first RING-type zinc finger) with UBE2L3. Associates with cullin-RING ubiquitin ligase (CRL) complexes containing CUL1, CUL2 and CUL3. Interacts with neddylated CUL1. Interacts with neddylated CUL2. Interacts with neddylated CUL3. Interacts with neddylated CUL4A. Widely expressed.

It is found in the cytoplasm. It localises to the nucleus. The protein localises to the cajal body. It catalyses the reaction [E2 ubiquitin-conjugating enzyme]-S-ubiquitinyl-L-cysteine + [acceptor protein]-L-lysine = [E2 ubiquitin-conjugating enzyme]-L-cysteine + [acceptor protein]-N(6)-ubiquitinyl-L-lysine.. The protein operates within protein modification; protein ubiquitination. Its activity is regulated as follows. Autoinhibited by the ariadne domain, which masks the second RING-type zinc finger that contains the active site and inhibits the E3 activity. Inhibition is relieved upon binding to neddylated cullin-RING ubiquitin ligase complexes, which activate the E3 ligase activity of ARIH1. Functionally, E3 ubiquitin-protein ligase, which catalyzes ubiquitination of target proteins together with ubiquitin-conjugating enzyme E2 UBE2L3. Acts as an atypical E3 ubiquitin-protein ligase by working together with cullin-RING ubiquitin ligase (CRL) complexes and initiating ubiquitination of CRL substrates: associates with CRL complexes and specifically mediates addition of the first ubiquitin on CRLs targets. The initial ubiquitin is then elongated by CDC34/UBE2R1 and UBE2R2. E3 ubiquitin-protein ligase activity is activated upon binding to neddylated cullin-RING ubiquitin ligase complexes. Plays a role in protein translation in response to DNA damage by mediating ubiquitination of EIF4E2, the consequences of EIF4E2 ubiquitination are however unclear. According to a report, EIF4E2 ubiquitination leads to promote EIF4E2 cap-binding and protein translation arrest. According to another report EIF4E2 ubiquitination leads to its subsequent degradation. Acts as the ligase involved in ISGylation of EIF4E2. In vitro, controls the degradation of the LINC (LInker of Nucleoskeleton and Cytoskeleton) complex member SUN2 and may therefore have a role in the formation and localization of the LINC complex, and as a consequence, nuclear subcellular localization and nuclear morphology. The protein is E3 ubiquitin-protein ligase ARIH1 of Homo sapiens (Human).